We begin with the raw amino-acid sequence, 430 residues long: Glutamate-1-semialdehyde 2,1-aminomutase (430 aa).

Residue Lys268 is modified to N6-(pyridoxal phosphate)lysine.

The protein belongs to the class-III pyridoxal-phosphate-dependent aminotransferase family. HemL subfamily. It depends on pyridoxal 5'-phosphate as a cofactor.

It localises to the cytoplasm. It carries out the reaction (S)-4-amino-5-oxopentanoate = 5-aminolevulinate. It functions in the pathway porphyrin-containing compound metabolism; protoporphyrin-IX biosynthesis; 5-aminolevulinate from L-glutamyl-tRNA(Glu): step 2/2. This Methanopyrus kandleri (strain AV19 / DSM 6324 / JCM 9639 / NBRC 100938) protein is Glutamate-1-semialdehyde 2,1-aminomutase.